The primary structure comprises 108 residues: MEETFTEITPQQAWEMMQNEDAVLVDIRDMVRFSHSRPQGAFHLTNHSYGKFLDEYDYDEPVIVSCYHGVSSRNTAQYLVEQGFERVYSVKGGFEGWVRSELPIELGY.

The Rhodanese domain occupies 18 to 106 (QNEDAVLVDI…WVRSELPIEL (89 aa)). Residue Cys66 is the Cysteine persulfide intermediate of the active site.

This sequence belongs to the GlpE family.

It localises to the cytoplasm. The catalysed reaction is thiosulfate + hydrogen cyanide = thiocyanate + sulfite + 2 H(+). It catalyses the reaction thiosulfate + [thioredoxin]-dithiol = [thioredoxin]-disulfide + hydrogen sulfide + sulfite + 2 H(+). Its function is as follows. Transferase that catalyzes the transfer of sulfur from thiosulfate to thiophilic acceptors such as cyanide or dithiols. May function in a CysM-independent thiosulfate assimilation pathway by catalyzing the conversion of thiosulfate to sulfite, which can then be used for L-cysteine biosynthesis. The polypeptide is Thiosulfate sulfurtransferase GlpE (Glaesserella parasuis serovar 5 (strain SH0165) (Haemophilus parasuis)).